Reading from the N-terminus, the 528-residue chain is MHQPSDFTNLDVNFLIFQSNLPITNNAPTDISIVNNSINILPVEINNNNNNNNNNNNNNNNNNNNNNNNNNNNNKNNNDGDDAAATNSINVIPVFEKTIQIGTTTKSGHFILDATAEVNDIQEIEENKDFIVRDTQQNRVLIGEGHYGKVYRSMYVSSDGRSLVNKMLKGKRECTKEVEALIDVFDASKMVTTQYFTTLGFSSIIMENMVDIGYVTLKQLLSMDDKQFSALASPFTCRSQMIKPIINAMVIALYSVNIEKNYTHFDLNHGNIFVNIHTLDTCQSISGSGSGSGSGSGSNTRNPVVLGDFGCARKMDVPIRLCDTNGHENYKSLERYWDYNQCRIKTTSFIRDNEDIFSLGVLIFEMLLTFVHPGTTLFEQNVLFLLKFHGIEIVPTGGPNNNYTTLKVAFSNDIRNFTSNTQFTTITFDSKFNPIISQIINYIQYYRNRPNSSQVLESLINNHQYSLNNNLPPIFVENPNDKYEPVDANSSDDSSVLYHSYDSSDADDTPSFEITITRDNFNQSINHQ.

The span at 49 to 77 shows a compositional bias: low complexity; that stretch reads NNNNNNNNNNNNNNNNNNNNNNNNNNKNN. The segment at 49 to 84 is disordered; that stretch reads NNNNNNNNNNNNNNNNNNNNNNNNNNKNNNDGDDAA. The Protein kinase domain maps to 136–466; the sequence is QQNRVLIGEG…ESLINNHQYS (331 aa). Residues 142–150 and Lys166 each bind ATP; that span reads IGEGHYGKV. Asp266 serves as the catalytic Proton acceptor.

This sequence belongs to the protein kinase superfamily. Ser/Thr protein kinase family.

It catalyses the reaction L-seryl-[protein] + ATP = O-phospho-L-seryl-[protein] + ADP + H(+). The catalysed reaction is L-threonyl-[protein] + ATP = O-phospho-L-threonyl-[protein] + ADP + H(+). The sequence is that of Probable serine/threonine-protein kinase DDB_G0282417 from Dictyostelium discoideum (Social amoeba).